Consider the following 277-residue polypeptide: Mannosyl-3-phosphoglycerate phosphatase (277 aa).

The active-site Nucleophile is Asp-13. Mg(2+) contacts are provided by Asp-13, Asp-15, and Asp-219.

The protein belongs to the HAD-like hydrolase superfamily. MPGP family. Mg(2+) is required as a cofactor.

It localises to the cytoplasm. It carries out the reaction 2-O-(alpha-D-mannosyl)-3-phosphoglycerate + H2O = (2R)-2-O-(alpha-D-mannosyl)-glycerate + phosphate. Its pathway is carbohydrate biosynthesis; 2-(alpha-D-mannosyl)-D-glycerate biosynthesis; 2-(alpha-D-mannosyl)-D-glycerate from GDP-alpha-D-mannose (MPG route): step 2/2. Functionally, hydrolyzes mannosyl-3-phosphoglycerate (MPG) to form the osmolyte mannosylglycerate (MG). This is Mannosyl-3-phosphoglycerate phosphatase from Aeropyrum pernix (strain ATCC 700893 / DSM 11879 / JCM 9820 / NBRC 100138 / K1).